The sequence spans 158 residues: Transcriptional repressor NrdR (158 aa).

The tract at residues 1–22 (MRCPYCGSEDTQVKDSRPAEDN) is disordered. Residues 3 to 34 (CPYCGSEDTQVKDSRPAEDNTSIRRRRICPDC) fold into a zinc finger. Over residues 11–22 (TQVKDSRPAEDN) the composition is skewed to basic and acidic residues. One can recognise an ATP-cone domain in the interval 49 to 139 (LMVIKKTGRK…VYRDFSLAED (91 aa)).

The protein belongs to the NrdR family. Requires Zn(2+) as cofactor.

Its function is as follows. Negatively regulates transcription of bacterial ribonucleotide reductase nrd genes and operons by binding to NrdR-boxes. The polypeptide is Transcriptional repressor NrdR (Rhizobium etli (strain CIAT 652)).